A 69-amino-acid polypeptide reads, in one-letter code: Large ribosomal subunit protein uL29 (69 aa).

The protein belongs to the universal ribosomal protein uL29 family.

The protein is Large ribosomal subunit protein uL29 of Lachnoclostridium phytofermentans (strain ATCC 700394 / DSM 18823 / ISDg) (Clostridium phytofermentans).